Consider the following 84-residue polypeptide: MKKQNLVEMEGTITESLPNAMFRVCLDNGCYVLAHISGKIRRNYIRILIGDRVKVELSPYDLSKGRITYRLRIKSINDSNDLIK.

The 72-residue stretch at 1 to 72 folds into the S1-like domain; sequence MKKQNLVEME…SKGRITYRLR (72 aa).

It belongs to the IF-1 family. Component of the 30S ribosomal translation pre-initiation complex which assembles on the 30S ribosome in the order IF-2 and IF-3, IF-1 and N-formylmethionyl-tRNA(fMet); mRNA recruitment can occur at any time during PIC assembly.

Its subcellular location is the plastid. It is found in the chloroplast. Its function is as follows. One of the essential components for the initiation of protein synthesis. Stabilizes the binding of IF-2 and IF-3 on the 30S subunit to which N-formylmethionyl-tRNA(fMet) subsequently binds. Helps modulate mRNA selection, yielding the 30S pre-initiation complex (PIC). Upon addition of the 50S ribosomal subunit IF-1, IF-2 and IF-3 are released leaving the mature 70S translation initiation complex. The protein is Translation initiation factor IF-1, chloroplastic of Spirogyra maxima (Green alga).